The chain runs to 340 residues: MTVIADTSRCFILPDLISYCQFPLRCNPHRDAAQSSTSWLINNYPGMSPEQLVEVRRLDADTLASYCYPDCDVERLRVASDFLAILFHLDDITDTMEEGGTEQLEGTIMDAFRSEGKLDQREDEPRVRVPAKDLWTRFIRNAKPCVQTRLRDNIALFFKTAREEARDRERGVLLDLESYINMRRGTSACLSCFALTEYSIGIELPQYVVDDPIVQALNQSANDLVSWSNDIYSFNNEQAHGIHNMIVILMKSQGLGMQDAIDYVSDLFKQTIDGFMENTQLLPSWGAAVDADVRLYVQGLQDWVVGNLHWSFATERYFGKRGAEIKATRVVELLPKKPVS.

Positions 90, 229, 233, and 237 each coordinate Mg(2+). A DDXXD motif motif is present at residues 90 to 94 (DDITD). The NSE/DTE motif signature appears at 229-237 (NDIYSFNNE). (2E,6E)-farnesyl diphosphate-binding residues include Arg-316 and Tyr-317.

The protein belongs to the terpene synthase family. Requires Mg(2+) as cofactor.

It carries out the reaction (2E,6E)-farnesyl diphosphate = delta-cadinene + diphosphate. It catalyses the reaction (2E,6E)-farnesyl diphosphate = bicyclogermacrene + diphosphate. Functionally, terpene cyclase that catalyzes the cyclization of farnesyl diphosphate (FPP) to various sesquiterpenes, including bicycloelemene, alpha-gurjunene, 9-epi-caryophylene, bicyclosesquiphellandrene, bicyclogermacrene and delta-cadinene. This Postia placenta (strain ATCC 44394 / Madison 698-R) (Brown rot fungus) protein is Sesquiterpene synthase 6.